The following is a 299-amino-acid chain: ATP phosphoribosyltransferase (299 aa).

This sequence belongs to the ATP phosphoribosyltransferase family. Long subfamily. Equilibrium between an active dimeric form, an inactive hexameric form and higher aggregates. Interconversion between the various forms is largely reversible and is influenced by the natural substrates and inhibitors of the enzyme. The cofactor is Mg(2+).

The protein resides in the cytoplasm. The enzyme catalyses 1-(5-phospho-beta-D-ribosyl)-ATP + diphosphate = 5-phospho-alpha-D-ribose 1-diphosphate + ATP. It participates in amino-acid biosynthesis; L-histidine biosynthesis; L-histidine from 5-phospho-alpha-D-ribose 1-diphosphate: step 1/9. Its activity is regulated as follows. Feedback inhibited by histidine. In terms of biological role, catalyzes the condensation of ATP and 5-phosphoribose 1-diphosphate to form N'-(5'-phosphoribosyl)-ATP (PR-ATP). Has a crucial role in the pathway because the rate of histidine biosynthesis seems to be controlled primarily by regulation of HisG enzymatic activity. This chain is ATP phosphoribosyltransferase, found in Buchnera aphidicola subsp. Melaphis rhois.